The chain runs to 479 residues: Ammonium transporter Rh type C (479 aa).

The Cytoplasmic portion of the chain corresponds to 1–9; the sequence is MAWNTNLRW. A helical membrane pass occupies residues 10 to 30; sequence RLPLTCLLLQVIMVILFGVFV. The Extracellular segment spans residues 31 to 60; it reads RYDFEADAHWWSERTHKNLSDMENEFYYRY. Asn-48 carries N-linked (GlcNAc...) asparagine glycosylation. Residues 61–81 traverse the membrane as a helical segment; that stretch reads PSFQDVHVMVFVGFGFLMTFL. The Cytoplasmic segment spans residues 82 to 85; that stretch reads QRYG. A helical transmembrane segment spans residues 86–106; sequence FSAVGFNFLLAAFGIQWALLM. The Extracellular portion of the chain corresponds to 107–123; the sequence is QGWFHFLQDRYIVVGVE. The chain crosses the membrane as a helical span at residues 124 to 144; that stretch reads NLINADFCVASVCVAFGAVLG. The Cytoplasmic portion of the chain corresponds to 145–148; it reads KVSP. Residues 149–169 traverse the membrane as a helical segment; sequence IQLLIMTFFQVTLFAVNEFIL. At 170-177 the chain is on the extracellular side; that stretch reads LNLLKVKD. A helical membrane pass occupies residues 178 to 200; that stretch reads AGGSMTIHTFGAYFGLTVTRILY. At 201–218 the chain is on the cytoplasmic side; the sequence is RRNLEQSKERQNSVYQSD. Residues 219-239 form a helical membrane-spanning segment; that stretch reads LFAMIGTLFLWMYWPSFNSAI. Topologically, residues 240 to 250 are extracellular; sequence SYHGDSQHRAA. A helical transmembrane segment spans residues 251–271; sequence INTYCSLAACVLTSVAISSAL. Residues 272–281 lie on the Cytoplasmic side of the membrane; sequence HKKGKLDMVH. The chain crosses the membrane as a helical span at residues 282–302; that stretch reads IQNATLAGGVAVGTAAEMMLM. Pro-303 is a topological domain (extracellular). The helical transmembrane segment at 304-324 threads the bilayer; sequence YGALIIGFVCGIISTLGFVYL. Over 325 to 345 the chain is Cytoplasmic; sequence TPFLESRLHIQDTCGINNLHG. The chain crosses the membrane as a helical span at residues 346-366; it reads IPGIIGGIVGAVTAASASLEV. The Extracellular portion of the chain corresponds to 367-394; the sequence is YGKEGLVHSFDFQGFNGDWTARTQGKFQ. The helical transmembrane segment at 395-415 threads the bilayer; sequence IYGLLVTLAMALMGGIIVGLI. At 416 to 479 the chain is on the cytoplasmic side; the sequence is LRLPFWGQPS…PMASSVPLVP (64 aa).

It belongs to the ammonium transporter (TC 2.A.49) family. Rh subfamily. In terms of assembly, homotrimer. Post-translationally, N-glycosylated. Expressed in brain, testis, placenta, pancreas, esophagus and prostate. Expressed in squamous epithelial tissues (at protein level). Expressed in kidney.

It localises to the cell membrane. It is found in the apical cell membrane. The enzyme catalyses NH4(+)(in) = NH4(+)(out). It carries out the reaction methylamine(out) = methylamine(in). It catalyses the reaction CO2(out) = CO2(in). Ammonium transporter involved in the maintenance of acid-base homeostasis. Transports ammonium and its related derivative methylammonium across the plasma membrane of epithelial cells likely contributing to renal transepithelial ammonia transport and ammonia metabolism. Postulated to primarily mediate an electroneutral bidirectional transport of NH3 ammonia species according to a mechanism that implies interaction of an NH4(+) ion with acidic residues of the pore entry followed by dissociation of NH4(+) into NH3 and H(+). As a result NH3 transits through the central pore and is protonated on the extracellular side reforming NH4(+). May act as a CO2 channel providing for renal acid secretion. The sequence is that of Ammonium transporter Rh type C (RHCG) from Homo sapiens (Human).